A 249-amino-acid chain; its full sequence is 1-(5-phosphoribosyl)-5-[(5-phosphoribosylamino)methylideneamino] imidazole-4-carboxamide isomerase (249 aa).

The Proton acceptor role is filled by aspartate 10. Aspartate 131 acts as the Proton donor in catalysis.

The protein belongs to the HisA/HisF family.

Its subcellular location is the cytoplasm. The enzyme catalyses 1-(5-phospho-beta-D-ribosyl)-5-[(5-phospho-beta-D-ribosylamino)methylideneamino]imidazole-4-carboxamide = 5-[(5-phospho-1-deoxy-D-ribulos-1-ylimino)methylamino]-1-(5-phospho-beta-D-ribosyl)imidazole-4-carboxamide. It participates in amino-acid biosynthesis; L-histidine biosynthesis; L-histidine from 5-phospho-alpha-D-ribose 1-diphosphate: step 4/9. The polypeptide is 1-(5-phosphoribosyl)-5-[(5-phosphoribosylamino)methylideneamino] imidazole-4-carboxamide isomerase (Brevibacillus brevis (strain 47 / JCM 6285 / NBRC 100599)).